The following is a 258-amino-acid chain: Imidazole glycerol phosphate synthase subunit HisF (258 aa).

Catalysis depends on residues Asp11 and Asp130.

The protein belongs to the HisA/HisF family. As to quaternary structure, heterodimer of HisH and HisF.

The protein resides in the cytoplasm. The catalysed reaction is 5-[(5-phospho-1-deoxy-D-ribulos-1-ylimino)methylamino]-1-(5-phospho-beta-D-ribosyl)imidazole-4-carboxamide + L-glutamine = D-erythro-1-(imidazol-4-yl)glycerol 3-phosphate + 5-amino-1-(5-phospho-beta-D-ribosyl)imidazole-4-carboxamide + L-glutamate + H(+). Its pathway is amino-acid biosynthesis; L-histidine biosynthesis; L-histidine from 5-phospho-alpha-D-ribose 1-diphosphate: step 5/9. Its function is as follows. IGPS catalyzes the conversion of PRFAR and glutamine to IGP, AICAR and glutamate. The HisF subunit catalyzes the cyclization activity that produces IGP and AICAR from PRFAR using the ammonia provided by the HisH subunit. This Xanthomonas campestris pv. campestris (strain 8004) protein is Imidazole glycerol phosphate synthase subunit HisF.